The chain runs to 402 residues: FMN-dependent alpha-hydroxy acid dehydrogenase qulF (402 aa).

Residues 22 to 394 enclose the FMN hydroxy acid dehydrogenase domain; sequence RLPAITTNPT…NRDCMRRISY (373 aa). Y48 is a binding site for a 2-oxocarboxylate. Residues S130 and Q152 each coordinate FMN. A 2-oxocarboxylate is bound by residues Y154 and R189. Residue K265 coordinates FMN. The active-site Proton acceptor is the H289. An a 2-oxocarboxylate-binding site is contributed by R292. Residues 320-324 and 343-344 contribute to the FMN site; these read DSGVR and GR.

It belongs to the FMN-dependent alpha-hydroxy acid dehydrogenase family. It depends on FMN as a cofactor.

Its function is as follows. FMN-dependent alpha-hydroxy acid dehydrogenase; part of the gene cluster that mediates the biosynthesis of quinolactacin A2 (QUL A2), a fungal alkaloid that features a quinolone-gamma-lactam hybrid, which is a potential pharmacophore for the treatment of cancer and Alzheimer's disease. The quinolone-gamma-lactam hybrid scaffold is synthesized from the combination of L-isoleucine (L-Ile) and the nonproteinogenic amino acid L-kynurenine, followed by quinolone cyclization, oxidative decarboxylation, and lactam formation. Additionally, the N-methyl group is derived from methionine, which might be catalyzed by an S-adenosylmethionine (SAM)-dependent methyltransferase. Bioconversion of L-tryptophan to L-kynurenine could be catalyzed by the indoleamine-2,3-dioxygenase (IDO) qulI to produce an unstable product, N-formyl-L-kynurenine, followed by kynurenine formamidase catalyzed hydrolysis. QulM then acts as a methyltransferase that methylates L-kynurenine at the N-4 position. The FMN-dependent alpha-hydroxy acid dehydrogenase qulF than functions as an oxidative decarboxylase which converts N-methylkynurenine into 2-aminobenzoylacetamide via 2 tandem reactions, including dehydrogenation and decarboxylation. An amidase located outside of the qul gene cluster further produces the unstable beta-keto acid precursor N-methyl-2-aminobenzoylacetate, which could be spontaneously dehydrated to form N-methyl-4-hydroxy-2-quinolone. The NRPS qulB is able to incorporate N-methyl-2-aminobenzoylacetate and efficiently compete with the spontaneous reaction. By further extending the beta-keto acid with L-Ile, qulA performs a Dieckmann condensation to form the gamma-lactam ring and release a 4-ketopyrrolidinone intermediate from the assembly line. This intermediate could plausibly further undergo a spontaneous cyclization to yield the final quinolone-gamma-lactam hybrid structure. The polypeptide is FMN-dependent alpha-hydroxy acid dehydrogenase qulF (Penicillium citrinum).